A 509-amino-acid chain; its full sequence is T-complex protein 11-like protein 1 (509 aa).

Positions 1 to 12 are enriched in basic and acidic residues; sequence MSENLDKSHVDE. The tract at residues 1-57 is disordered; that stretch reads MSENLDKSHVDEAGEAEAAASEQGLEGALECSDETLQKKVKSDSPSSQRVGRPHSSP. The span at 16-30 shows a compositional bias: low complexity; the sequence is AEAAASEQGLEGALE. S56 carries the phosphoserine modification.

This sequence belongs to the TCP11 family.

The chain is T-complex protein 11-like protein 1 (Tcp11l1) from Mus musculus (Mouse).